Consider the following 140-residue polypeptide: uncharacterized protein (140 aa).

This is an uncharacterized protein from Synechococcus sp. (strain WH8020).